A 943-amino-acid polypeptide reads, in one-letter code: Isoleucine--tRNA ligase (943 aa).

The 'HIGH' region motif lies at 59 to 69 (PYANGRIHLGH). An L-isoleucyl-5'-AMP-binding site is contributed by glutamate 577. Residues 618 to 622 (KMSKS) carry the 'KMSKS' region motif. Lysine 621 is an ATP binding site. Residues cysteine 906, cysteine 909, cysteine 926, and cysteine 929 each contribute to the Zn(2+) site.

Belongs to the class-I aminoacyl-tRNA synthetase family. IleS type 1 subfamily. In terms of assembly, monomer. Requires Zn(2+) as cofactor.

The protein resides in the cytoplasm. The enzyme catalyses tRNA(Ile) + L-isoleucine + ATP = L-isoleucyl-tRNA(Ile) + AMP + diphosphate. Functionally, catalyzes the attachment of isoleucine to tRNA(Ile). As IleRS can inadvertently accommodate and process structurally similar amino acids such as valine, to avoid such errors it has two additional distinct tRNA(Ile)-dependent editing activities. One activity is designated as 'pretransfer' editing and involves the hydrolysis of activated Val-AMP. The other activity is designated 'posttransfer' editing and involves deacylation of mischarged Val-tRNA(Ile). This Stenotrophomonas maltophilia (strain R551-3) protein is Isoleucine--tRNA ligase.